A 144-amino-acid chain; its full sequence is NADH dehydrogenase [ubiquinone] 1 alpha subcomplex subunit 13 (144 aa).

The residue at position 2 (alanine 2) is an N-acetylalanine. A helical transmembrane segment spans residues 30–51; the sequence is LSGYSMFAVGIGALIFGYWRMM.

The protein belongs to the complex I NDUFA13 subunit family. As to quaternary structure, complex I is composed of 45 different subunits. Interacts with CARD15, but not with CARD4. Interacts with STAT3, but not with STAT1, STAT2 and STAT5A. Interacts with OLFM4.

The protein resides in the mitochondrion inner membrane. It localises to the nucleus. Functionally, accessory subunit of the mitochondrial membrane respiratory chain NADH dehydrogenase (Complex I), that is believed not to be involved in catalysis. Complex I functions in the transfer of electrons from NADH to the respiratory chain. The immediate electron acceptor for the enzyme is believed to be ubiquinone. Involved in the interferon/all-trans-retinoic acid (IFN/RA) induced cell death. This apoptotic activity is inhibited by interaction with viral IRF1. Prevents the transactivation of STAT3 target genes. May play a role in CARD15-mediated innate mucosal responses and serve to regulate intestinal epithelial cell responses to microbes. This Mus musculus (Mouse) protein is NADH dehydrogenase [ubiquinone] 1 alpha subcomplex subunit 13 (Ndufa13).